The following is a 269-amino-acid chain: Formamidopyrimidine-DNA glycosylase (269 aa).

The active-site Schiff-base intermediate with DNA is proline 2. The active-site Proton donor is glutamate 3. Catalysis depends on lysine 57, which acts as the Proton donor; for beta-elimination activity. DNA is bound by residues histidine 90, arginine 109, and lysine 150. An FPG-type zinc finger spans residues 235–269; it reads QVYGRKGEPCRVCGTPIVATKHAQRATFYCRQCQK. Arginine 259 serves as the catalytic Proton donor; for delta-elimination activity.

This sequence belongs to the FPG family. Monomer. Requires Zn(2+) as cofactor.

It catalyses the reaction Hydrolysis of DNA containing ring-opened 7-methylguanine residues, releasing 2,6-diamino-4-hydroxy-5-(N-methyl)formamidopyrimidine.. It carries out the reaction 2'-deoxyribonucleotide-(2'-deoxyribose 5'-phosphate)-2'-deoxyribonucleotide-DNA = a 3'-end 2'-deoxyribonucleotide-(2,3-dehydro-2,3-deoxyribose 5'-phosphate)-DNA + a 5'-end 5'-phospho-2'-deoxyribonucleoside-DNA + H(+). Functionally, involved in base excision repair of DNA damaged by oxidation or by mutagenic agents. Acts as a DNA glycosylase that recognizes and removes damaged bases. Has a preference for oxidized purines, such as 7,8-dihydro-8-oxoguanine (8-oxoG). Has AP (apurinic/apyrimidinic) lyase activity and introduces nicks in the DNA strand. Cleaves the DNA backbone by beta-delta elimination to generate a single-strand break at the site of the removed base with both 3'- and 5'-phosphates. In Escherichia coli (strain 55989 / EAEC), this protein is Formamidopyrimidine-DNA glycosylase.